A 354-amino-acid chain; its full sequence is D-alanine--D-alanine ligase (354 aa).

The ATP-grasp domain maps to 133 to 338; it reads KHLFAQAGLP…YSDLIEQLVE (206 aa). 166 to 221 contacts ATP; it reads EKELGYPCFVKPANLGSSVGISKCRNREELEKAFELAFEYDRKIVVEEGIAGREIE. D292, E305, and N307 together coordinate Mg(2+).

It belongs to the D-alanine--D-alanine ligase family. Mg(2+) is required as a cofactor. The cofactor is Mn(2+).

Its subcellular location is the cytoplasm. The catalysed reaction is 2 D-alanine + ATP = D-alanyl-D-alanine + ADP + phosphate + H(+). It functions in the pathway cell wall biogenesis; peptidoglycan biosynthesis. Cell wall formation. In Bacillus velezensis (strain DSM 23117 / BGSC 10A6 / LMG 26770 / FZB42) (Bacillus amyloliquefaciens subsp. plantarum), this protein is D-alanine--D-alanine ligase.